Here is a 285-residue protein sequence, read N- to C-terminus: uncharacterized protein (285 aa).

Residues 184 to 282 form the HTH araC/xylS-type domain; that stretch reads HSICNWVQDN…GLTPGEYSAR (99 aa). 2 DNA-binding regions (H-T-H motif) span residues 201-222 and 249-272; these read ESVA…AQHG and IHEV…RRQF.

This is an uncharacterized protein from Escherichia coli (strain K12).